A 429-amino-acid chain; its full sequence is 3-phosphoshikimate 1-carboxyvinyltransferase (429 aa).

3 residues coordinate 3-phosphoshikimate: lysine 21, serine 22, and arginine 26. Lysine 21 contributes to the phosphoenolpyruvate binding site. The phosphoenolpyruvate site is built by glycine 94 and arginine 122. Residues serine 167, glutamine 169, aspartate 315, and lysine 342 each coordinate 3-phosphoshikimate. Position 169 (glutamine 169) interacts with phosphoenolpyruvate. The Proton acceptor role is filled by aspartate 315. Residues arginine 346 and arginine 388 each coordinate phosphoenolpyruvate.

This sequence belongs to the EPSP synthase family. As to quaternary structure, monomer.

It is found in the cytoplasm. It catalyses the reaction 3-phosphoshikimate + phosphoenolpyruvate = 5-O-(1-carboxyvinyl)-3-phosphoshikimate + phosphate. It functions in the pathway metabolic intermediate biosynthesis; chorismate biosynthesis; chorismate from D-erythrose 4-phosphate and phosphoenolpyruvate: step 6/7. Functionally, catalyzes the transfer of the enolpyruvyl moiety of phosphoenolpyruvate (PEP) to the 5-hydroxyl of shikimate-3-phosphate (S3P) to produce enolpyruvyl shikimate-3-phosphate and inorganic phosphate. This Desulforudis audaxviator (strain MP104C) protein is 3-phosphoshikimate 1-carboxyvinyltransferase.